Reading from the N-terminus, the 183-residue chain is Protein SHI RELATED SEQUENCE 6 (183 aa).

Positions 41, 44, 52, 57, 61, and 68 each coordinate Zn(2+). Positions 41 to 68 (CRDCGNRAKKECLFERCRTCCKSRGYNC) form a DNA-binding region, zn(2)-C6 fungal-type; degenerate. The segment covering 79–88 (SSATRSSSSP) has biased composition (low complexity). The segment at 79-121 (SSATRSSSSPSERKKKLKIDKQSSPNVSLLPTTTSRQERGFRE) is disordered. Over residues 100–113 (QSSPNVSLLPTTTS) the composition is skewed to polar residues. Residues 157 to 160 (ISGH) carry the Required for homo- and heterodimerization motif.

The protein belongs to the SHI protein family.

The protein localises to the nucleus. Its function is as follows. Transcription activator that binds DNA on 5'-ACTCTAC-3' and promotes auxin homeostasis-regulating gene expression (e.g. YUC genes), as well as genes affecting stamen development, cell expansion and timing of flowering. Synergistically with other SHI-related proteins, regulates gynoecium, stamen and leaf development in a dose-dependent manner, controlling apical-basal patterning. Promotes style and stigma formation, and influences vascular development during gynoecium development. May also have a role in the formation and/or maintenance of the shoot apical meristem (SAM). This is Protein SHI RELATED SEQUENCE 6 (SRS6) from Arabidopsis thaliana (Mouse-ear cress).